The chain runs to 63 residues: Cypmaclein (63 aa).

This sequence belongs to the GASA family. In terms of tissue distribution, expressed in pollen (at protein level).

The protein is Cypmaclein of Cryptomeria japonica (Japanese cedar).